A 105-amino-acid chain; its full sequence is Large ribosomal subunit protein uL24 (105 aa).

Belongs to the universal ribosomal protein uL24 family. As to quaternary structure, part of the 50S ribosomal subunit.

One of two assembly initiator proteins, it binds directly to the 5'-end of the 23S rRNA, where it nucleates assembly of the 50S subunit. Its function is as follows. One of the proteins that surrounds the polypeptide exit tunnel on the outside of the subunit. This chain is Large ribosomal subunit protein uL24, found in Vibrio campbellii (strain ATCC BAA-1116).